The sequence spans 312 residues: Pantothenate kinase (312 aa).

97-104 (GSVAVGKS) provides a ligand contact to ATP.

This sequence belongs to the prokaryotic pantothenate kinase family.

The protein resides in the cytoplasm. It catalyses the reaction (R)-pantothenate + ATP = (R)-4'-phosphopantothenate + ADP + H(+). Its pathway is cofactor biosynthesis; coenzyme A biosynthesis; CoA from (R)-pantothenate: step 1/5. The protein is Pantothenate kinase of Mycobacterium sp. (strain JLS).